A 296-amino-acid chain; its full sequence is tRNA pseudouridine synthase B (296 aa).

Residue aspartate 38 is the Nucleophile of the active site.

Belongs to the pseudouridine synthase TruB family. Type 1 subfamily.

The catalysed reaction is uridine(55) in tRNA = pseudouridine(55) in tRNA. In terms of biological role, responsible for synthesis of pseudouridine from uracil-55 in the psi GC loop of transfer RNAs. The sequence is that of tRNA pseudouridine synthase B from Ehrlichia ruminantium (strain Gardel).